Reading from the N-terminus, the 415-residue chain is Histidine--tRNA ligase (415 aa).

It belongs to the class-II aminoacyl-tRNA synthetase family. As to quaternary structure, homodimer.

The protein localises to the cytoplasm. It catalyses the reaction tRNA(His) + L-histidine + ATP = L-histidyl-tRNA(His) + AMP + diphosphate + H(+). The polypeptide is Histidine--tRNA ligase (Idiomarina loihiensis (strain ATCC BAA-735 / DSM 15497 / L2-TR)).